Here is a 269-residue protein sequence, read N- to C-terminus: uncharacterized protein (269 aa).

The ACT domain maps to 14-89; sequence FEYEIQVNRP…KLREPRLRDR (76 aa).

This is an uncharacterized protein from Bacillus subtilis (strain 168).